Reading from the N-terminus, the 203-residue chain is Suppressor/enhancer of lin-12 protein 9 (203 aa).

The N-terminal stretch at 1–18 (MNSLTWILAVLFVTPAAS) is a signal peptide. At 19-170 (YFIHVDANEE…RNINENTNSR (152 aa)) the chain is on the lumenal side. The 83-residue stretch at 28-110 (EQCFFDRLTS…PKAVMFTVEI (83 aa)) folds into the GOLD domain. A helical transmembrane segment spans residues 171 to 191 (VVMWAAFEAFVLVGMTVGQIF). Topologically, residues 192–203 (YLKRFFEVRTMV) are cytoplasmic.

Belongs to the EMP24/GP25L family.

The protein resides in the cytoplasmic vesicle membrane. It localises to the cytoplasmic vesicle. Its subcellular location is the COPI-coated vesicle membrane. It is found in the golgi apparatus membrane. Functionally, may have a role in the negative regulation of lin-12 and glp-1 transport to the cell surface. May also have a role in a quality control mechanism for endoplasmic reticulum-Golgi transport; the budding of coatomer-coated and other species of coated vesicles, could bind cargo molecules to collect them into budding vesicles. Involved in regulating the expression of proteasomal subunits such as rpt-3 in order to confer resistance to proteasomal dysfunction. This is Suppressor/enhancer of lin-12 protein 9 (sel-9) from Caenorhabditis elegans.